A 436-amino-acid polypeptide reads, in one-letter code: Prenyltransferase nscD (436 aa).

It belongs to the tryptophan dimethylallyltransferase family.

It functions in the pathway secondary metabolite biosynthesis. In terms of biological role, prenyltransferase; part of the gene cluster that mediates the biosynthesis of neosartoricin B, a prenylated anthracenone that probably exhibits T-cell antiproliferative activity, suggestive of a physiological role as an immunosuppressive agent. The non-reducing polyketide synthase nscA probably synthesizes and cyclizes the decaketide backbone. The hydrolase nscB then mediates the product release through hydrolysis followed by spontaneous decarboxylation. The prenyltransferase nscD catalyzes the addition of the dimethylallyl group to the aromatic C5. The FAD-dependent monooxygenase nscC is then responsible for the stereospecific hydroxylation at C2. Neosartoricin B can be converted into two additional compounds neosartoricins C and D. Neosartoricin C is a spirocyclic compound that is cyclized through the attack of C3 hydroxyl on C14, followed by dehydration. On the other hand, neosartoricin D is a further cyclized compound in which attack of C2 on C14 in neosartoricin C results in the formation of the acetal-containing dioxabicyclo-octanone ring. Both of these compounds are novel and possibly represent related metabolites of the gene cluster. This Trichophyton rubrum (strain ATCC MYA-4607 / CBS 118892) (Athlete's foot fungus) protein is Prenyltransferase nscD.